The primary structure comprises 639 residues: Phosphatidylinositol 3,4,5-trisphosphate 3-phosphatase cnrN (639 aa).

Residues 20–190 form the Phosphatase tensin-type domain; that stretch reads FKSKEMDLDL…NYFKEIVSGS (171 aa). The Phosphocysteine intermediate role is filled by Cys129. The C2 tensin-type domain maps to 195-350; it reads EFVLTFRSIE…LQMECRFQNN (156 aa). Disordered stretches follow at residues 243–265, 395–429, 451–498, 519–567, and 598–628; these read INND…NNNN, NNIL…HSTP, SSSG…SCSS, NNNN…RKRK, and FTKK…DPSE. Low complexity-rich tracts occupy residues 244 to 265, 395 to 424, 458 to 486, and 519 to 554; these read NNDN…NNNN, NNIL…LPSS, NSSR…SRSS, and NNNN…SNSN. Polar residues predominate over residues 598–608; the sequence is FTKKINPNNNE. The segment covering 619–628 has biased composition (basic and acidic residues); sequence LKKETNDPSE.

It depends on Mg(2+) as a cofactor.

It carries out the reaction a 1,2-diacyl-sn-glycero-3-phospho-(1D-myo-inositol-3,4,5-trisphosphate) + H2O = a 1,2-diacyl-sn-glycero-3-phospho-(1D-myo-inositol-4,5-bisphosphate) + phosphate. Functionally, protein phosphatase that negatively regulates PI3K-dependent pathways. Regulates cAMP signal transduction to control territory size. During development, a lawn of Dictyostelium cells breaks up into territories where cells aggregate in dendritic streams to form groups of 20'000 cells. In Dictyostelium discoideum (Social amoeba), this protein is Phosphatidylinositol 3,4,5-trisphosphate 3-phosphatase cnrN (cnrN).